The following is a 432-amino-acid chain: Enolase (432 aa).

The segment at 41-64 (QVPSGASTGSFEAHELRDGDPKRY) is disordered. Positions 52–64 (EAHELRDGDPKRY) are enriched in basic and acidic residues. Residue Gln168 participates in (2R)-2-phosphoglycerate binding. Glu211 (proton donor) is an active-site residue. Mg(2+) is bound by residues Asp248, Glu289, and Asp316. 4 residues coordinate (2R)-2-phosphoglycerate: Lys341, Arg370, Ser371, and Lys392. The active-site Proton acceptor is Lys341.

Belongs to the enolase family. The cofactor is Mg(2+).

It localises to the cytoplasm. The protein resides in the secreted. Its subcellular location is the cell surface. The catalysed reaction is (2R)-2-phosphoglycerate = phosphoenolpyruvate + H2O. Its pathway is carbohydrate degradation; glycolysis; pyruvate from D-glyceraldehyde 3-phosphate: step 4/5. In terms of biological role, catalyzes the reversible conversion of 2-phosphoglycerate (2-PG) into phosphoenolpyruvate (PEP). It is essential for the degradation of carbohydrates via glycolysis. This chain is Enolase, found in Synechocystis sp. (strain ATCC 27184 / PCC 6803 / Kazusa).